A 516-amino-acid chain; its full sequence is GMP synthase [glutamine-hydrolyzing] (516 aa).

A Glutamine amidotransferase type-1 domain is found at 5–199; that stretch reads PIVILDFGSQ…ARKICGITSK (195 aa). Cys-82 (nucleophile) is an active-site residue. Catalysis depends on residues His-173 and Glu-175. Residues 200-391 enclose the GMPS ATP-PPase domain; it reads WDMGHFAKEQ…LGLPREMVYR (192 aa). ATP is bound at residue 227 to 233; it reads SGGVDSS.

In terms of assembly, homodimer.

It carries out the reaction XMP + L-glutamine + ATP + H2O = GMP + L-glutamate + AMP + diphosphate + 2 H(+). It participates in purine metabolism; GMP biosynthesis; GMP from XMP (L-Gln route): step 1/1. Functionally, catalyzes the synthesis of GMP from XMP. The protein is GMP synthase [glutamine-hydrolyzing] of Nitratiruptor sp. (strain SB155-2).